Consider the following 520-residue polypeptide: MPGSLPLNAEACWPKDVGIVALEIYFPSQYVDQAELEKYDGVDAGKYTIGLGQARMGFCTDREDINSLCLTVVQKLMERNSLSYDCIGRLEVGTETIIDKSKSVKSNLMQLFEESGNTDIEGIDTTNACYGGTAAVFNAVNWIESSSWDGRYALVVAGDIAIYASGNARPTGGVGAVALLIGPNAPVIFDRGLRGTHMQHAYDFYKPDMLSEYPVVDGKLSIQCYLSALDRCYSVYRKKIRAQWQKEGKDKDFTLNDFGFMIFHSPYCKLVQKSLARMFLNDFLNDQNRDKNSIYSGLEAFGDVKLEDTYFDRDVEKAFMKASAELFNQKTKASLLVSNQNGNMYTSSVYGSLASVLAQYSPQQLAGKRIGVFSYGSGLAATLYSLKVTQDATPGSALDKITASLCDLKSRLDSRTCVAPDVFAENMKLREDTHHLANYIPQCSIDSLFEGTWYLVRVDEKHRRTYARRPSTNDHSLDEGVGLVHSNTATEHIPSPAKKVPRLPATSGEPESAVISNGEH.

Residue serine 4 is modified to Phosphoserine. Positions 43 and 44 each coordinate (3S)-3-hydroxy-3-methylglutaryl-CoA. Residue 44-46 (AGK) participates in CoA binding. Residue lysine 46 is modified to N6-acetyllysine. The Proton donor/acceptor role is filled by glutamate 95. Residues cysteine 129, asparagine 167, threonine 171, serine 221, and histidine 264 each contribute to the (3S)-3-hydroxy-3-methylglutaryl-CoA site. Cysteine 129 functions as the Acyl-thioester intermediate in the catalytic mechanism. Asparagine 167 contributes to the CoA binding site. Serine 221 serves as a coordination point for CoA. Histidine 264 functions as the Proton donor/acceptor in the catalytic mechanism. Positions 269 and 273 each coordinate CoA. Lysine 273, asparagine 343, and serine 377 together coordinate (3S)-3-hydroxy-3-methylglutaryl-CoA. The residue at position 273 (lysine 273) is an N6-acetyllysine. The interval 487–520 (NTATEHIPSPAKKVPRLPATSGEPESAVISNGEH) is disordered. Phosphoserine occurs at positions 495 and 516.

The protein belongs to the thiolase-like superfamily. HMG-CoA synthase family. In terms of assembly, homodimer.

The protein localises to the cytoplasm. The catalysed reaction is acetoacetyl-CoA + acetyl-CoA + H2O = (3S)-3-hydroxy-3-methylglutaryl-CoA + CoA + H(+). It participates in metabolic intermediate biosynthesis; (R)-mevalonate biosynthesis; (R)-mevalonate from acetyl-CoA: step 2/3. Functionally, catalyzes the condensation of acetyl-CoA with acetoacetyl-CoA to form HMG-CoA, which is converted by HMG-CoA reductase (HMGCR) into mevalonate, a precursor for cholesterol synthesis. In Rattus norvegicus (Rat), this protein is Hydroxymethylglutaryl-CoA synthase, cytoplasmic.